Reading from the N-terminus, the 2242-residue chain is DEP domain-containing protein DDB_G0279099 (2242 aa).

Disordered regions lie at residues 388–465, 576–644, 701–730, 871–965, 1077–1194, 1287–1336, 1384–1414, 1446–1471, and 1502–1521; these read SQNT…SNNS, DSNA…YSRV, PILR…FDQK, DPTT…TKKS, QLQL…AFNS, GSQQ…MNGS, SELL…ALPE, AQSS…NTSG, and SNNN…NSLN. Positions 392-440 form a coiled coil; the sequence is IQNNNNNNNNNNNNNNNNNNNNNNNNNNNNNNNNNNNNNSNNNKNNQNN. Residues 581–614 are compositionally biased toward low complexity; sequence GGNNNNNYNNNNGNGNGHNHNNHNNNNNNNNNND. Acidic residues predominate over residues 622-631; it reads EPSDFSDTED. 2 stretches are compositionally biased toward polar residues: residues 632 to 642 and 719 to 729; these read NSSTTPNSQYS and HPISPSNSFDQ. The segment covering 872–955 has biased composition (low complexity); the sequence is PTTTTTTGGT…PNSSNTVPNS (84 aa). A coiled-coil region spans residues 1066–1101; that stretch reads IPTVENNQHQQQLQLEQQEKEKEKARLAALEKKKPF. Residues 1082 to 1106 show a composition bias toward basic and acidic residues; the sequence is QQEKEKEKARLAALEKKKPFPREDS. Low complexity-rich tracts occupy residues 1108 to 1182 and 1287 to 1299; these read STLI…ATTA and GSQQ…GSQS. A compositionally biased stretch (polar residues) spans 1300 to 1311; that stretch reads APTSPLTPHKNI. 3 stretches are compositionally biased toward low complexity: residues 1312 to 1336, 1384 to 1410, and 1446 to 1470; these read NTNN…MNGS, SELL…GENN, and AQSS…TNTS. Positions 1556-1629 constitute a DEP domain; it reads IGIKMTERKY…DGQFYYRLKE (74 aa). The segment covering 1645–1668 has biased composition (low complexity); the sequence is TNNNFNNNNTNSNNNQQQQQQQQS. Disordered stretches follow at residues 1645 to 1763, 1803 to 1910, 2122 to 2145, and 2165 to 2218; these read TNNN…SMSN, DEAN…QQQQ, NYNN…NLLK, and NSDT…KNEM. Residues 1669–1702 show a composition bias toward polar residues; sequence IPSVTSSAVNSPNKDSNTPDHSPISSPKQIGNKL. Low complexity-rich tracts occupy residues 1703–1760 and 1807–1848; these read SSSS…IQSS and GDNN…SSNS. Positions 1791–1821 form a coiled coil; the sequence is LTNKEKDKEKEIDEANGDNNNNNNNNNNNNN. Polar residues-rich tracts occupy residues 1849–1871 and 1879–1889; these read GQGS…TNPL and YGSSVQNSNQH. Composition is skewed to low complexity over residues 1890–1910 and 2122–2133; these read QQQQ…QQQQ and NYNNNNNNNNNN. Basic and acidic residues-rich tracts occupy residues 2166-2181 and 2192-2218; these read SDTE…DNNH and DTDH…KNEM.

It in the N-terminal section; belongs to the IML1 family.

The chain is DEP domain-containing protein DDB_G0279099 from Dictyostelium discoideum (Social amoeba).